The chain runs to 351 residues: DNA polymerase IV (351 aa).

The region spanning 4–185 (IIHVDMDCFF…LPLAKIPGVG (182 aa)) is the UmuC domain. The Mg(2+) site is built by Asp8 and Asp103. Glu104 is a catalytic residue.

This sequence belongs to the DNA polymerase type-Y family. As to quaternary structure, monomer. The cofactor is Mg(2+).

Its subcellular location is the cytoplasm. The catalysed reaction is DNA(n) + a 2'-deoxyribonucleoside 5'-triphosphate = DNA(n+1) + diphosphate. Poorly processive, error-prone DNA polymerase involved in untargeted mutagenesis. Copies undamaged DNA at stalled replication forks, which arise in vivo from mismatched or misaligned primer ends. These misaligned primers can be extended by PolIV. Exhibits no 3'-5' exonuclease (proofreading) activity. May be involved in translesional synthesis, in conjunction with the beta clamp from PolIII. The sequence is that of DNA polymerase IV from Salmonella paratyphi B (strain ATCC BAA-1250 / SPB7).